A 215-amino-acid chain; its full sequence is Adenylate kinase (215 aa).

Residue 10–15 coordinates ATP; sequence GAGKGT. An NMP region spans residues 30-59; the sequence is STGDILRDAVSKGTELGKMAKAIMDRGELV. Residues Thr-31, Arg-36, 57-59, 82-85, and Gln-89 each bind AMP; these read ELV and GYPR. Residues 123 to 160 form an LID region; it reads NRRVCPNCGKVYNLITLQPKEDEKCDVCGTKLIQRDDD. Arg-124 serves as a coordination point for ATP. The Zn(2+) site is built by Cys-127 and Cys-130. Position 133 to 134 (133 to 134) interacts with ATP; that stretch reads VY. Residues Cys-147 and Cys-150 each contribute to the Zn(2+) site. AMP is bound by residues Arg-157 and Arg-168. Gln-196 contributes to the ATP binding site.

The protein belongs to the adenylate kinase family. Monomer.

The protein localises to the cytoplasm. It carries out the reaction AMP + ATP = 2 ADP. It functions in the pathway purine metabolism; AMP biosynthesis via salvage pathway; AMP from ADP: step 1/1. Its function is as follows. Catalyzes the reversible transfer of the terminal phosphate group between ATP and AMP. Plays an important role in cellular energy homeostasis and in adenine nucleotide metabolism. The protein is Adenylate kinase of Petrotoga mobilis (strain DSM 10674 / SJ95).